The chain runs to 83 residues: Arminin 3b (83 aa).

The signal sequence occupies residues 1 to 18 (MKIVFAILFLTFIALTYA). Residues 19 to 57 (RSFEDLKEEIKNEIEKEIFDDLEEESDELDNNVKKFNDA) constitute a propeptide that is removed on maturation. The residue at position 80 (serine 80) is a Serine amide.

Belongs to the arminin family. In terms of tissue distribution, expressed in entodermal epithelium along the body column.

It localises to the secreted. The protein resides in the target cell membrane. Antimicrobial peptide with a broad-spectrum antimicrobial activity. Keeps its antibacterial activity under a wide range of salt concentrations that mimic physiological conditions of human blood, which is surprising, since Hydra is an obligate freshwater animal with nearly no salt tolerance. Does not affect red blood cells. The protein is Arminin 3b of Hydra vulgaris (Hydra).